The following is a 524-amino-acid chain: MSDILPLDVIGRRVEVNGEYATVRFCGAVPPVAGLWLGVEWDNPERGKHDGSHEGTMYFKCRHPTGGSFVRPNIVNFGEDFLTALKKRYVLTDGPDDDEKSCSLKVGSKQVQTIGFEHITKKQSQLRSLQDISLWKCAVSCAGERGRIAEACPNIRVVDLSKNLLSTWDEVILIAEQLKDLEALDLSENKLQFPSDSPTLTRTFSTLKTLVLNKTGITWTEVLHCAPSWPVLQELYLKSNGISISERPVNALQNLRLLDLSSNPSIDESQLCLIAYLPRLEHLLLSDIGLSSIHFPDAEIGCKTSMFPALTYLIVNDNQISEWSFINELDKLQSLQALSCARNPLTKGDKAEEIIIAKIGQLKTLNRCQILPEERRGAELDYRKAFGKEWRKAGGHPDPDRNRPSAEFLSAHPRYQLLCCKYGAPEDEELKTQQPFMLKNQLLTLKIKCSNQPEQQILEKQLPDSMTIQKVKGLLSRLLKVPVSELLLSYESSKMPGREIELENDLQPLQFYSVENGDCLLVRW.

An N-acetylserine modification is found at Ser-2. Positions 27–71 (GAVPPVAGLWLGVEWDNPERGKHDGSHEGTMYFKCRHPTGGSFVR) constitute a CAP-Gly domain. LRR repeat units lie at residues 154 to 175 (NIRVVDLSKNLLSTWDEVILIA), 180 to 201 (DLEALDLSENKLQFPSDSPTLT), 206 to 227 (TLKTLVLNKTGITWTEVLHCAP), 231 to 253 (VLQELYLKSNGISISERPVNALQ), 254 to 273 (NLRLLDLSSNPSIDESQLCL), 279 to 300 (RLEHLLLSDIGLSSIHFPDAEI), and 309 to 330 (ALTYLIVNDNQISEWSFINELD). The 39-residue stretch at 343–381 (NPLTKGDKAEEIIIAKIGQLKTLNRCQILPEERRGAELD) folds into the LRRCT domain. An N6-acetyllysine modification is found at Lys-460. Phosphoserine is present on Ser-492.

This sequence belongs to the TBCE family. In terms of assembly, supercomplex made of cofactors A to E. Cofactors A and D function by capturing and stabilizing tubulin in a quasi-native conformation. Cofactor E binds to the cofactor D-tubulin complex; interaction with cofactor C then causes the release of tubulin polypeptides that are committed to the native state. Cofactors B and E can form a heterodimer which binds to alpha-tubulin and enhances their ability to dissociate tubulin heterodimers. Interacts with TBCD.

It localises to the cytoplasm. It is found in the cytoskeleton. Its function is as follows. Tubulin-folding protein; involved in the second step of the tubulin folding pathway and in the regulation of tubulin heterodimer dissociation. Required for correct organization of microtubule cytoskeleton and mitotic splindle, and maintenance of the neuronal microtubule network. The chain is Tubulin-specific chaperone E (Tbce) from Rattus norvegicus (Rat).